The sequence spans 347 residues: NADH-ubiquinone oxidoreductase chain 2 (347 aa).

10 helical membrane-spanning segments follow: residues 1 to 21 (MNPL…GIVM), 25 to 45 (HWLT…PILM), 59 to 79 (YFLT…INLV), 96 to 116 (IILT…FWVP), 122 to 142 (VHLP…MSVL), 148 to 168 (MINL…GGWG), 200 to 220 (MALL…LTFM), 240 to 260 (ITTI…LSGF), 274 to 294 (NSII…FFYM), and 325 to 345 (LLSP…MLML).

It belongs to the complex I subunit 2 family. As to quaternary structure, core subunit of respiratory chain NADH dehydrogenase (Complex I) which is composed of 45 different subunits. Interacts with TMEM242.

Its subcellular location is the mitochondrion inner membrane. The enzyme catalyses a ubiquinone + NADH + 5 H(+)(in) = a ubiquinol + NAD(+) + 4 H(+)(out). In terms of biological role, core subunit of the mitochondrial membrane respiratory chain NADH dehydrogenase (Complex I) which catalyzes electron transfer from NADH through the respiratory chain, using ubiquinone as an electron acceptor. Essential for the catalytic activity and assembly of complex I. The sequence is that of NADH-ubiquinone oxidoreductase chain 2 from Thoopterus nigrescens (Swift fruit bat).